The sequence spans 296 residues: CDP-diacylglycerol--glycerol-3-phosphate 3-phosphatidyltransferase 1, chloroplastic/mitochondrial (296 aa).

A chloroplast and mitochondrion-targeting transit peptide spans 1 to 39 (MLRSGLASLIVDVNLRRTLRPSPTFSFPAHLSRCIITSR). The segment covering 62–82 (FSSSSSSEQSRPTSSSRNSFS) has biased composition (low complexity). Positions 62-103 (FSSSSSSEQSRPTSSSRNSFSGHGQLDSDDNSSPPPSQSSSK) are disordered. 5 consecutive transmembrane segments (helical) span residues 104 to 124 (VLTL…LLVA), 126 to 146 (FYVD…AAAI), 164 to 184 (FGAF…LILL), 189 to 209 (IQVA…IAII), and 261 to 281 (VGWL…LSVW).

Belongs to the CDP-alcohol phosphatidyltransferase class-I family. Requires Mn(2+) as cofactor.

It is found in the plastid. The protein resides in the chloroplast membrane. It localises to the mitochondrion membrane. It catalyses the reaction a CDP-1,2-diacyl-sn-glycerol + sn-glycerol 3-phosphate = a 1,2-diacyl-sn-glycero-3-phospho-(1'-sn-glycero-3'-phosphate) + CMP + H(+). Its pathway is phospholipid metabolism; phosphatidylglycerol biosynthesis; phosphatidylglycerol from CDP-diacylglycerol: step 1/2. Functionally, catalyzes the committed step to the synthesis of the acidic phospholipids, including phosphatidylglycerol (PG). Transfers specifically a phosphatidyl group from CDP-diacylglycerol to glycerol-3-phosphate to form phosphatidylglycerophosphate. Cannot catalyze the phosphatidyl group transfer to inositol, serine, choline or phosphatidylglycerol. Possesses high activity with CDP-dipalmitoylglycerol and low activity with CDP-dioleoylglycerol. Essential for chloroplast differentiation and PG accumulation in thylakoids, an essential process for the assembly of antenna-reaction center complexes to optimize energy transfer from antenna pigments, and for subsequent photochemical efficiency of photosystem II (PSII). During cold acclimation (at 5 degrees Celsius), necessary for the photosystem I (PSI) photochemistry, including both reaction center and light-harvesting integrity. But dispensable in mitochondrion, being redundant with PGPS2 for the production of PG and its derivative cardiolipin (CL) in mitochondrial membranes. Together with PGPS2, required for the proper embryo development by providing PG accurate levels. In Arabidopsis thaliana (Mouse-ear cress), this protein is CDP-diacylglycerol--glycerol-3-phosphate 3-phosphatidyltransferase 1, chloroplastic/mitochondrial.